Reading from the N-terminus, the 467-residue chain is MNTVRSEKDSMGAIDVPADKLWGAQTQRSLEHFRISTEKMPTSLIHALALTKRAAAKVNEDLGLLSEEKASAIRQAADEVLAGQHDDEFPLAIWQTGSGTQSNMNMNEVLANRASELLGGVRGMERKVHPNDDVNKSQSSNDVFPTAMHVAALLALRKQLIPQLKTLTQTLSEKSRAFADIVKIGRTHLQDATPLTLGQEISGWVAMLEHNLKHIEYSLPHVAELALGGTAVGTGLNTHPEYARRVADELAVITCAPFVTAPNKFEALATCDALVQAHGALKGLAASLMKIANDVRWLASGPRCGIGEISIPENEPGSSIMPGKVNPTQCEALTMLCCQVMGNDVAINMGGASGNFELNVFRPMVIHNFLQSVRLLADGMESFNKHCAVGIEPNRERINQLLNESLMLVTALNTHIGYDKAAEIAKKAHKEGLTLKAAALALGYLSEAEFDSWVRPEQMVGSMKAGR.

Substrate-binding positions include 98–100, arginine 126, 129–132, 139–141, and threonine 187; these read SGT, HPND, and SSN. The active-site Proton donor/acceptor is the histidine 188. Serine 318 is an active-site residue. Residues serine 319 and 324-326 each bind substrate; that span reads KVN.

The protein belongs to the class-II fumarase/aspartase family. Fumarase subfamily. As to quaternary structure, homotetramer.

Its subcellular location is the cytoplasm. It catalyses the reaction (S)-malate = fumarate + H2O. It functions in the pathway carbohydrate metabolism; tricarboxylic acid cycle; (S)-malate from fumarate: step 1/1. Its function is as follows. Involved in the TCA cycle. Catalyzes the stereospecific interconversion of fumarate to L-malate. This chain is Fumarate hydratase class II, found in Escherichia coli O157:H7.